The primary structure comprises 366 residues: S-adenosylmethionine:tRNA ribosyltransferase-isomerase (366 aa).

Belongs to the QueA family. As to quaternary structure, monomer.

The protein resides in the cytoplasm. The catalysed reaction is 7-aminomethyl-7-carbaguanosine(34) in tRNA + S-adenosyl-L-methionine = epoxyqueuosine(34) in tRNA + adenine + L-methionine + 2 H(+). Its pathway is tRNA modification; tRNA-queuosine biosynthesis. Its function is as follows. Transfers and isomerizes the ribose moiety from AdoMet to the 7-aminomethyl group of 7-deazaguanine (preQ1-tRNA) to give epoxyqueuosine (oQ-tRNA). The polypeptide is S-adenosylmethionine:tRNA ribosyltransferase-isomerase (Synechococcus sp. (strain CC9605)).